Reading from the N-terminus, the 187-residue chain is Adenylate kinase (187 aa).

11–16 (GAGKGT) contributes to the ATP binding site. The segment at 31-60 (STGDILREAVKNQTPMGIEAKRYMDAGDLV) is NMP. Residues Thr-32, Arg-37, 58-60 (DLV), 86-89 (GFPR), and Gln-93 each bind AMP. The interval 127–137 (GRAEIEGRADD) is LID. Arg-128 serves as a coordination point for ATP. Residues Arg-134 and Arg-145 each coordinate AMP. Gly-173 provides a ligand contact to ATP.

It belongs to the adenylate kinase family. As to quaternary structure, monomer.

The protein resides in the cytoplasm. It catalyses the reaction AMP + ATP = 2 ADP. The protein operates within purine metabolism; AMP biosynthesis via salvage pathway; AMP from ADP: step 1/1. Functionally, catalyzes the reversible transfer of the terminal phosphate group between ATP and AMP. Plays an important role in cellular energy homeostasis and in adenine nucleotide metabolism. The polypeptide is Adenylate kinase (Leptospira borgpetersenii serovar Hardjo-bovis (strain JB197)).